The chain runs to 251 residues: MRKPIIAGNWKMNKTLSEAVSFVEEVKGQIPAASAVDAVVCSPALFLERLVAATEGTDLQVGAQNMHFEKNGAFTGEISPVALSDLKVGYVVLGHSERREMFAETDESVNKKTIAAFEHGLTPIVCCGETLEERESGKTFDLVAGQVTKALAGLTEEQVKATVIAYEPIWAIGTGKSSSSADANEVCAHIRKVVAEAVSPEAAEAVRIQYGGSVKPENIKEYMAQSDIDGALVGGASLEPASFLGLLGAVK.

9-11 lines the substrate pocket; that stretch reads NWK. The active-site Electrophile is His95. Glu167 acts as the Proton acceptor in catalysis. Substrate contacts are provided by residues Gly173, Ser213, and 234-235; that span reads GG. Ser213 carries the post-translational modification Phosphoserine.

This sequence belongs to the triosephosphate isomerase family. Homodimer.

It localises to the cytoplasm. The catalysed reaction is D-glyceraldehyde 3-phosphate = dihydroxyacetone phosphate. It participates in carbohydrate biosynthesis; gluconeogenesis. The protein operates within carbohydrate degradation; glycolysis; D-glyceraldehyde 3-phosphate from glycerone phosphate: step 1/1. Its function is as follows. Involved in the gluconeogenesis. Catalyzes stereospecifically the conversion of dihydroxyacetone phosphate (DHAP) to D-glyceraldehyde-3-phosphate (G3P). This is Triosephosphate isomerase from Bacillus cereus (strain B4264).